Here is a 322-residue protein sequence, read N- to C-terminus: Sideroflexin-1 (322 aa).

Residue S2 is modified to N-acetylserine. Residues S2 to T102 are Mitochondrial matrix-facing. A helical membrane pass occupies residues I103 to W120. Over Q121 to E146 the chain is Mitochondrial intermembrane. A helical membrane pass occupies residues L147–A167. The Mitochondrial matrix portion of the chain corresponds to L168–P174. A helical membrane pass occupies residues L175–L195. The Mitochondrial intermembrane segment spans residues M196–Q228. The chain crosses the membrane as a helical span at residues V229–N249. The Mitochondrial matrix segment spans residues T250–P266. A helical transmembrane segment spans residues I267–F287. Topologically, residues P288–L322 are mitochondrial intermembrane.

Belongs to the sideroflexin family. Highly expressed in tissues with high one-carbon metabolism activity, such as blood, liver and kidney.

The protein localises to the mitochondrion inner membrane. The enzyme catalyses L-serine(in) = L-serine(out). The catalysed reaction is L-alanine(in) = L-alanine(out). It catalyses the reaction L-cysteine(in) = L-cysteine(out). Amino acid transporter importing serine, an essential substrate of the mitochondrial branch of the one-carbon pathway, into mitochondria. Mitochondrial serine is then converted to glycine and formate, which exits to the cytosol where it is used to generate the charged folates that serve as one-carbon donors. May also transport other amino acids including alanine and cysteine. The protein is Sideroflexin-1 of Homo sapiens (Human).